Here is a 210-residue protein sequence, read N- to C-terminus: Ribonuclease HII (210 aa).

The RNase H type-2 domain maps to 18-210 (GLIAGVDEVG…FKPVKALLGL (193 aa)). Asp24, Glu25, and Asp116 together coordinate a divalent metal cation.

The protein belongs to the RNase HII family. Requires Mn(2+) as cofactor. Mg(2+) is required as a cofactor.

Its subcellular location is the cytoplasm. It catalyses the reaction Endonucleolytic cleavage to 5'-phosphomonoester.. Its function is as follows. Endonuclease that specifically degrades the RNA of RNA-DNA hybrids. The protein is Ribonuclease HII of Shewanella baltica (strain OS155 / ATCC BAA-1091).